The sequence spans 162 residues: Protein FAM162B (162 aa).

The segment at 26-69 (EATRRPAPALPPRGLPCYSSGGAPSNSGPQGHGEIHRVPTQRRP) is disordered. Residues 107–127 (VKACYIMIGLTIIACFAVIVS) traverse the membrane as a helical segment.

The protein belongs to the UPF0389 family.

The protein localises to the membrane. This chain is Protein FAM162B (FAM162B), found in Homo sapiens (Human).